Here is an 88-residue protein sequence, read N- to C-terminus: Phosphocarrier protein HPr (88 aa).

The HPr domain occupies 1 to 88; it reads MEQKSYVIID…DILSKEGLTK (88 aa). Catalysis depends on H15, which acts as the Pros-phosphohistidine intermediate. S46 carries the phosphoserine; by HPrK/P modification.

The protein belongs to the HPr family.

Its subcellular location is the cytoplasm. With respect to regulation, phosphorylation on Ser-46 inhibits the phosphoryl transfer from enzyme I to HPr. In terms of biological role, general (non sugar-specific) component of the phosphoenolpyruvate-dependent sugar phosphotransferase system (sugar PTS). This major carbohydrate active-transport system catalyzes the phosphorylation of incoming sugar substrates concomitantly with their translocation across the cell membrane. The phosphoryl group from phosphoenolpyruvate (PEP) is transferred to the phosphoryl carrier protein HPr by enzyme I. Phospho-HPr then transfers it to the PTS EIIA domain. The sequence is that of Phosphocarrier protein HPr (ptsH) from Staphylococcus xylosus.